An 80-amino-acid chain; its full sequence is Centromere protein X (80 aa).

The protein belongs to the CENP-X/MHF2 family. Heterodimer with CENPX, sometimes called MHF; this interaction stabilizes both partners. MHF heterodimers can assemble to form tetrameric structures. MHF also coassemble with CENPT-CENPW heterodimers at centromeres to form the tetrameric CENP-T-W-S-X complex. Forms a discrete complex with FANCM and CENPX, called FANCM-MHF; this interaction, probably mediated by direct binding between CENPS and FANCM, leads to synergistic activation of double-stranded DNA binding and strongly stimulates FANCM-mediated DNA remodeling. Recruited by FANCM to the Fanconi anemia (FA) core complex, which consists of CENPS, CENPX, FANCA, FANCB, FANCC, FANCE, FANCF, FANCG, FANCL, FANCM, FAAP24 and FAAP100. The FA core complex associates with Bloom syndrome (BLM) complex, which consists of at least BLM, DNA topoisomerase 3-alpha (TOP3A), RMI1/BLAP75, RPA1/RPA70 and RPA2/RPA32. The super complex between FA and BLM is called BRAFT.

The protein resides in the nucleus. It localises to the chromosome. The protein localises to the centromere. It is found in the kinetochore. Its function is as follows. DNA-binding component of the Fanconi anemia (FA) core complex. Required for the normal activation of the FA pathway, leading to monoubiquitination of the FANCI-FANCD2 complex in response to DNA damage, cellular resistance to DNA cross-linking drugs, and prevention of chromosomal breakage. In complex with CENPS (MHF heterodimer), crucial cofactor for FANCM in both binding and ATP-dependent remodeling of DNA. Stabilizes FANCM. In complex with CENPS and FANCM (but not other FANC proteins), rapidly recruited to blocked forks and promotes gene conversion at blocked replication forks. In complex with CENPS, CENPT and CENPW (CENP-T-W-S-X heterotetramer), involved in the formation of a functional kinetochore outer plate, which is essential for kinetochore-microtubule attachment and faithful mitotic progression. As a component of MHF and CENP-T-W-S-X complexes, binds DNA and bends it to form a nucleosome-like structure. DNA-binding function is fulfilled in the presence of CENPS, with the following preference for DNA substates: Holliday junction &gt; double-stranded &gt; splay arm &gt; single-stranded. Does not bind DNA on its own. The polypeptide is Centromere protein X (CENPX) (Gallus gallus (Chicken)).